Reading from the N-terminus, the 227-residue chain is 2,3-bisphosphoglycerate-dependent phosphoglycerate mutase (227 aa).

Substrate is bound by residues 7–14 (RHGFSEWN), 20–21 (TG), arginine 59, 86–89 (ERHY), lysine 97, 113–114 (RR), and 182–183 (GN). Histidine 8 acts as the Tele-phosphohistidine intermediate in catalysis. The active-site Proton donor/acceptor is glutamate 86.

The protein belongs to the phosphoglycerate mutase family. BPG-dependent PGAM subfamily. As to quaternary structure, homodimer.

It catalyses the reaction (2R)-2-phosphoglycerate = (2R)-3-phosphoglycerate. The protein operates within carbohydrate degradation; glycolysis; pyruvate from D-glyceraldehyde 3-phosphate: step 3/5. Catalyzes the interconversion of 2-phosphoglycerate and 3-phosphoglycerate. This Haemophilus influenzae (strain 86-028NP) protein is 2,3-bisphosphoglycerate-dependent phosphoglycerate mutase.